A 374-amino-acid polypeptide reads, in one-letter code: LIM domain-binding protein 1-A (374 aa).

Disordered regions lie at residues 1–24 (MLDRDVGPTPMYPPSYMEPGIGRH), 249–297 (PPAE…ALSS), and 322–374 (TRLE…QSSQ). Residues 267 to 297 (SGGSTMSSGGGNNNNSNSKKKSPASSFALSS) show a composition bias toward low complexity. The 40-residue stretch at 299–338 (DVMVVGEPTLMGGEFGDEDERLITRLENTQFDAANGIDDE) folds into the LIM interaction domain (LID) domain. Polar residues predominate over residues 341–374 (FNSSPTMGTNSPWNSKAPSSQQGKNDNPSSQSSQ).

It belongs to the LDB family. As to expression, expressed ubiquitously in the embryo and adult.

The protein localises to the nucleus. Its function is as follows. Binds to the LIM domain of a wide variety of LIM domain-containing transcription factors. This chain is LIM domain-binding protein 1-A (ldb1a), found in Danio rerio (Zebrafish).